We begin with the raw amino-acid sequence, 153 residues long: Ribosomal RNA large subunit methyltransferase H (153 aa).

Residues leucine 70, glycine 102, and 121–126 (LSSMTF) contribute to the S-adenosyl-L-methionine site.

This sequence belongs to the RNA methyltransferase RlmH family. As to quaternary structure, homodimer.

The protein resides in the cytoplasm. It catalyses the reaction pseudouridine(1915) in 23S rRNA + S-adenosyl-L-methionine = N(3)-methylpseudouridine(1915) in 23S rRNA + S-adenosyl-L-homocysteine + H(+). Functionally, specifically methylates the pseudouridine at position 1915 (m3Psi1915) in 23S rRNA. The sequence is that of Ribosomal RNA large subunit methyltransferase H from Dictyoglomus thermophilum (strain ATCC 35947 / DSM 3960 / H-6-12).